Reading from the N-terminus, the 509-residue chain is Movement protein (509 aa).

It is found in the host cell junction. The protein resides in the host plasmodesma. Its subcellular location is the host cytoplasm. Its function is as follows. Transports viral genome to neighboring plant cells directly through plasmosdesmata, without any budding. The movement protein allows efficient cell to cell propagation, by bypassing the host cell wall barrier. In Rice dwarf virus (isolate Fujian) (RDV), this protein is Movement protein.